The chain runs to 201 residues: 3-isopropylmalate dehydratase small subunit (201 aa).

The protein belongs to the LeuD family. LeuD type 1 subfamily. Heterodimer of LeuC and LeuD.

The catalysed reaction is (2R,3S)-3-isopropylmalate = (2S)-2-isopropylmalate. Its pathway is amino-acid biosynthesis; L-leucine biosynthesis; L-leucine from 3-methyl-2-oxobutanoate: step 2/4. In terms of biological role, catalyzes the isomerization between 2-isopropylmalate and 3-isopropylmalate, via the formation of 2-isopropylmaleate. The protein is 3-isopropylmalate dehydratase small subunit of Erwinia tasmaniensis (strain DSM 17950 / CFBP 7177 / CIP 109463 / NCPPB 4357 / Et1/99).